A 143-amino-acid polypeptide reads, in one-letter code: NADH-quinone oxidoreductase subunit A (143 aa).

Helical transmembrane passes span 8–28, 63–83, and 93–113; these read FGNV…GYLT, FYVV…LYPW, and FALI…AYAW.

Belongs to the complex I subunit 3 family. As to quaternary structure, NDH-1 is composed of 14 different subunits. Subunits NuoA, H, J, K, L, M, N constitute the membrane sector of the complex.

Its subcellular location is the cell inner membrane. The catalysed reaction is a quinone + NADH + 5 H(+)(in) = a quinol + NAD(+) + 4 H(+)(out). In terms of biological role, NDH-1 shuttles electrons from NADH, via FMN and iron-sulfur (Fe-S) centers, to quinones in the respiratory chain. The immediate electron acceptor for the enzyme in this species is believed to be a menaquinone. Couples the redox reaction to proton translocation (for every two electrons transferred, four hydrogen ions are translocated across the cytoplasmic membrane), and thus conserves the redox energy in a proton gradient. This chain is NADH-quinone oxidoreductase subunit A, found in Pelodictyon phaeoclathratiforme (strain DSM 5477 / BU-1).